Here is a 328-residue protein sequence, read N- to C-terminus: Glycerol-3-phosphate dehydrogenase [NAD(P)+] (328 aa).

Positions 15, 35, 51, and 107 each coordinate NADPH. Sn-glycerol 3-phosphate is bound by residues Lys-107, Gly-135, and Ser-137. Ala-139 is an NADPH binding site. Lys-190, Asp-243, Ser-253, Arg-254, and Asn-255 together coordinate sn-glycerol 3-phosphate. Lys-190 functions as the Proton acceptor in the catalytic mechanism. Position 254 (Arg-254) interacts with NADPH. NADPH contacts are provided by Leu-276 and Glu-278.

It belongs to the NAD-dependent glycerol-3-phosphate dehydrogenase family.

It localises to the cytoplasm. The catalysed reaction is sn-glycerol 3-phosphate + NAD(+) = dihydroxyacetone phosphate + NADH + H(+). It carries out the reaction sn-glycerol 3-phosphate + NADP(+) = dihydroxyacetone phosphate + NADPH + H(+). The protein operates within membrane lipid metabolism; glycerophospholipid metabolism. Functionally, catalyzes the reduction of the glycolytic intermediate dihydroxyacetone phosphate (DHAP) to sn-glycerol 3-phosphate (G3P), the key precursor for phospholipid synthesis. This is Glycerol-3-phosphate dehydrogenase [NAD(P)+] from Rhodopseudomonas palustris (strain BisA53).